Here is a 569-residue protein sequence, read N- to C-terminus: Spermatogenesis-associated protein 16 (569 aa).

This sequence belongs to the SPATA16 family.

It is found in the golgi apparatus. It localises to the cytoplasmic vesicle. Its subcellular location is the secretory vesicle. The protein localises to the acrosome. Its function is as follows. Essential for spermiogenesis and male fertility. Involved in the formation of sperm acrosome during spermatogenesis. The protein is Spermatogenesis-associated protein 16 (SPATA16) of Macaca fascicularis (Crab-eating macaque).